The following is a 260-amino-acid chain: Imidazole glycerol phosphate synthase subunit HisF (260 aa).

Active-site residues include D11 and D130.

Belongs to the HisA/HisF family. As to quaternary structure, heterodimer of HisH and HisF.

It is found in the cytoplasm. The enzyme catalyses 5-[(5-phospho-1-deoxy-D-ribulos-1-ylimino)methylamino]-1-(5-phospho-beta-D-ribosyl)imidazole-4-carboxamide + L-glutamine = D-erythro-1-(imidazol-4-yl)glycerol 3-phosphate + 5-amino-1-(5-phospho-beta-D-ribosyl)imidazole-4-carboxamide + L-glutamate + H(+). Its pathway is amino-acid biosynthesis; L-histidine biosynthesis; L-histidine from 5-phospho-alpha-D-ribose 1-diphosphate: step 5/9. Functionally, IGPS catalyzes the conversion of PRFAR and glutamine to IGP, AICAR and glutamate. The HisF subunit catalyzes the cyclization activity that produces IGP and AICAR from PRFAR using the ammonia provided by the HisH subunit. The chain is Imidazole glycerol phosphate synthase subunit HisF from Caulobacter sp. (strain K31).